Consider the following 1352-residue polypeptide: Astrotactin-2 (1352 aa).

Residues 1-31 (MAAAGARRSPGRGLGLRGRPRLGFHPGPPPP) form a disordered region. An N-terminal signal peptide occupies residues 1 to 51 (MAAAGARRSPGRGLGLRGRPRLGFHPGPPPPPPPPLLLLFLLLLPPPPLLA). Residues 52–218 (GATAAAASRE…IVEEQMHILH (167 aa)) are Lumenal-facing. N-linked (GlcNAc...) asparagine glycosylation is present at asparagine 180. The chain crosses the membrane as a helical span at residues 219 to 239 (ISVMGGLIALLLLLLVFTVAL). The Cytoplasmic portion of the chain corresponds to 240–447 (YAQRRWQKRR…KGLLKSPVNK (208 aa)). Disordered stretches follow at residues 308–327 (EEEEEPPRRANHVSREDEFG) and 375–421 (TPVE…ADDE). Positions 383 to 392 (QPASRSSTSA) are enriched in polar residues. A helical transmembrane segment spans residues 448–468 (TALTLIAVSSCILAMVCGNQM). Over 469–1352 (SCPLTVKVTL…RNTYGETKGR (884 aa)) the chain is Lumenal. EGF-like domains are found at residues 523–563 (VRDL…HLCV), 664–708 (PVRD…SGCY), and 712–764 (KGID…KSCL). Intrachain disulfides connect cysteine 527/cysteine 539, cysteine 535/cysteine 546, cysteine 548/cysteine 562, cysteine 668/cysteine 681, cysteine 675/cysteine 692, cysteine 694/cysteine 707, cysteine 716/cysteine 728, cysteine 724/cysteine 748, and cysteine 750/cysteine 763. An N-linked (GlcNAc...) asparagine glycan is attached at asparagine 796. 3 disulfides stabilise this stretch: cysteine 838-cysteine 1000, cysteine 929-cysteine 990, and cysteine 996-cysteine 1003. Residue asparagine 1033 is glycosylated (N-linked (GlcNAc...) asparagine). Cystine bridges form between cysteine 1049/cysteine 1060, cysteine 1062/cysteine 1075, cysteine 1149/cysteine 1171, cysteine 1203/cysteine 1290, and cysteine 1311/cysteine 1334. Residues 1079-1201 (PQPVLRLSPT…SELSTVTLRT (123 aa)) form the Fibronectin type-III domain.

This sequence belongs to the astrotactin family. Interacts with ASTN1; the interaction is not calcium-dependent. Detected in cerebellum granule neurons; not detected in astroglia (at protein level). Detected primarily in cerebellum, and at lower levels in brain cortex, olfactory bulb, hindbrain and hippocampus dentate gyrus. Between 6 and 10 days after birth, when granule cell migration occurs in the cerebellum, detected in granule cell precursors in the external germinal layer, the molecular layer, the internal granule layer and in Purkinje neurons. Detected in postmitotic neurons in adult cerebellum.

The protein resides in the membrane. It is found in the perikaryon. Its subcellular location is the cytoplasm. The protein localises to the cell cortex. It localises to the early endosome. The protein resides in the late endosome. It is found in the cytoplasmic vesicle. Its subcellular location is the clathrin-coated vesicle. Mediates recycling of the neuronal cell adhesion molecule ASTN1 to the anterior pole of the cell membrane in migrating neurons. Promotes ASTN1 internalization and intracellular transport of endocytosed ASTN1. Selectively binds inositol-4,5-bisphosphate, inositol-3,4,5-trisphosphate and inositol-1,3,4,5-tetrakisphosphate, suggesting it is recruited to membranes that contain lipids with a phosphoinositide headgroup. The sequence is that of Astrotactin-2 (Astn2) from Mus musculus (Mouse).